The chain runs to 1482 residues: Cystic fibrosis transmembrane conductance regulator (1482 aa).

Residues 1 to 77 are Cytoplasmic-facing; that stretch reads MQRSPLEKAS…KLINALRRCF (77 aa). A helical membrane pass occupies residues 78-98; sequence FWRFMFYGILLYLGEVTKAVQ. The region spanning 81-365 is the ABC transmembrane type-1 1 domain; the sequence is FMFYGILLYL…WAVQTWYDSL (285 aa). Over 99–122 the chain is Extracellular; the sequence is PLLLGRIIASYDPDNKVERSIAIY. A helical membrane pass occupies residues 123–146; it reads LGIGLCLLFIVRTLLLHPAIFGLH. Residues 147–195 are Cytoplasmic-facing; it reads HIGMQMRIAMFSLIYKKILKLSSRVLDKISIGQLVSLLSNNLNKFDEGL. A helical transmembrane segment spans residues 196–216; that stretch reads ALAHFVWIAPLQVTLLMGLLW. Over 217-222 the chain is Extracellular; sequence ELLQAS. Residues 223–243 form a helical membrane-spanning segment; the sequence is AFCGLGFLIVLALVQAGLGRM. Residues 244–298 lie on the Cytoplasmic side of the membrane; that stretch reads MMKYRDQRAGKINERLVITSEMIENIQSVKAYCWEEAMEKMIENLRQTELKLTRK. The helical transmembrane segment at 299-319 threads the bilayer; sequence AAYVRYFNSSAFFFSGFFVVF. At 320-339 the chain is on the extracellular side; the sequence is LSVLPYALIKGIILRKIFTT. The chain crosses the membrane as a helical span at residues 340-358; that stretch reads ISFCIVLRMAVTRQFPWAV. At 359–859 the chain is on the cytoplasmic side; sequence QTWYDSLGAI…YLRYLAVNKS (501 aa). ATP-binding positions include tryptophan 401, 458–465, and glutamine 493; that span reads GSTGAGKT. In terms of domain architecture, ABC transporter 1 spans 423–646; that stretch reads NGDNSLFFSN…RPDFSSKLMG (224 aa). Cysteine 524 is lipidated: S-palmitoyl cysteine. Residues serine 549 and serine 660 each carry the phosphoserine modification. Positions 654–832 are disordered R region; that stretch reads SAERRNSILT…EEINEEYLKE (179 aa). At serine 670 the chain carries Phosphoserine; by PKA. Residue serine 686 is modified to Phosphoserine. Lysine 688 participates in a covalent cross-link: Glycyl lysine isopeptide (Lys-Gly) (interchain with G-Cter in ubiquitin). Residues serine 700 and serine 712 each carry the phosphoserine modification. A Phosphothreonine modification is found at threonine 717. 5 positions are modified to phosphoserine: serine 738, serine 769, serine 791, serine 796, and serine 814. A helical membrane pass occupies residues 860-880; that stretch reads LSLVLIWCLVIFLAEVAISLA. The 297-residue stretch at 860–1156 folds into the ABC transmembrane type-1 2 domain; sequence LSLVLIWCLV…AVNSSIDVDS (297 aa). At 881 to 919 the chain is on the extracellular side; it reads VLLLLDKSPRYSKGNGTASGNGSSAVIITSTSSYYLFYI. Asparagine 895 and asparagine 901 each carry an N-linked (GlcNAc...) asparagine glycan. A discontinuously helical transmembrane segment spans residues 920 to 940; the sequence is YVGVADTLLALGFFRGLPLVH. Over 941-991 the chain is Cytoplasmic; the sequence is TLITVSKILHHRMLHSVLRAPMSTLNMLKAGGILNRFSKDIAILDDLLPLT. The helical transmembrane segment at 992 to 1012 threads the bilayer; sequence IFDFVQLLLIVIGAVAVVSVL. At 1013-1014 the chain is on the extracellular side; sequence QP. A helical transmembrane segment spans residues 1015–1035; the sequence is YIFLATVPVIAAFVILRGYFL. Residues 1036-1096 lie on the Cytoplasmic side of the membrane; sequence HTSQQLKQLE…TANWFLYLST (61 aa). The chain crosses the membrane as a helical span at residues 1097–1117; it reads LRWFQMRIEMIFVVFFIAVTF. Over 1118–1131 the chain is Extracellular; sequence ISILTTGEGEGTVG. The helical transmembrane segment at 1132 to 1152 threads the bilayer; that stretch reads IILTLAMNIMGTLQWAVNSSI. Residues 1153-1482 lie on the Cytoplasmic side of the membrane; sequence DVDSLMRSVS…TEEEVQETRL (330 aa). The ABC transporter 2 domain occupies 1212–1445; it reads MTVKDLTARY…KSLFRQAISP (234 aa). Residues tyrosine 1221 and 1246–1253 contribute to the ATP site; that span reads GRTGAGKS. The segment at 1388 to 1482 is interaction with GORASP2; sequence RTLKQAFADC…TEEEVQETRL (95 aa). A lipid anchor (S-palmitoyl cysteine) is attached at cysteine 1397. Serine 1446 and serine 1458 each carry phosphoserine. Residues 1450-1482 form a disordered region; it reads KLFPRRNSSKHKSRSPITALKEETEEEVQETRL. The segment covering 1451 to 1463 has biased composition (basic residues); that stretch reads LFPRRNSSKHKSR. Positions 1472–1482 are enriched in acidic residues; sequence ETEEEVQETRL. A PDZ-binding motif is present at residues 1480 to 1482; that stretch reads TRL.

The protein belongs to the ABC transporter superfamily. ABCC family. CFTR transporter (TC 3.A.1.202) subfamily. In terms of assembly, monomer; does not require oligomerization for channel activity. May form oligomers in the membrane. Interacts with SLC26A3, SLC26A6 and NHERF1. Interacts with SHANK2. Interacts with MYO6. Interacts (via C-terminus) with GOPC (via PDZ domain); this promotes CFTR internalization and thereby decreases channel activity. Interacts with SLC4A7 through NHERF1. Found in a complex with MYO5B and RAB11A. Interacts with ANO1. Interacts with SLC26A8. Interacts with AHCYL1; the interaction increases CFTR activity. Interacts with CSE1L. The core-glycosylated form interacts with GORASP2 (via PDZ GRASP-type 1 domain) in respone to ER stress. Interacts with MARCHF2; the interaction leads to CFTR ubiqtuitination and degradation. Interacts with ADGRG2. N-glycosylated. In terms of processing, phosphorylated; cAMP treatment promotes phosphorylation and activates the channel. Dephosphorylation decreases the ATPase activity (in vitro). Phosphorylation at PKA sites activates the channel. Phosphorylation at PKC sites enhances the response to phosphorylation by PKA. Phosphorylated by AMPK; this inhibits channel activity. Post-translationally, ubiquitinated, leading to its degradation in the lysosome. Deubiquitination by USP10 in early endosomes enhances its endocytic recycling to the cell membrane. Ubiquitinated by RNF185 during ER stress. Ubiquitinated by MARCHF2.

The protein localises to the apical cell membrane. The protein resides in the early endosome membrane. Its subcellular location is the cell membrane. It is found in the recycling endosome membrane. It localises to the endoplasmic reticulum membrane. The protein localises to the nucleus. It carries out the reaction ATP + H2O + closed Cl(-) channel = ADP + phosphate + open Cl(-) channel.. It catalyses the reaction chloride(in) = chloride(out). The catalysed reaction is hydrogencarbonate(in) = hydrogencarbonate(out). The enzyme catalyses ATP + H2O = ADP + phosphate + H(+). Its function is as follows. Epithelial ion channel that plays an important role in the regulation of epithelial ion and water transport and fluid homeostasis. Mediates the transport of chloride ions across the cell membrane. Possesses an intrinsic ATPase activity and utilizes ATP to gate its channel; the passive flow of anions through the channel is gated by cycles of ATP binding and hydrolysis by the ATP-binding domains. The ion channel is also permeable to HCO(3)(-); selectivity depends on the extracellular chloride concentration. Exerts its function also by modulating the activity of other ion channels and transporters. Contributes to the regulation of the pH and the ion content of the epithelial fluid layer. Modulates the activity of the epithelial sodium channel (ENaC) complex, in part by regulating the cell surface expression of the ENaC complex. May regulate bicarbonate secretion and salvage in epithelial cells by regulating the transporter SLC4A7. Can inhibit the chloride channel activity of ANO1. Plays a role in the chloride and bicarbonate homeostasis during sperm epididymal maturation and capacitation. The polypeptide is Cystic fibrosis transmembrane conductance regulator (Otolemur garnettii (Small-eared galago)).